We begin with the raw amino-acid sequence, 340 residues long: Glyceraldehyde-3-phosphate dehydrogenase, cytosolic (340 aa).

NAD(+) contacts are provided by residues 16-17 (RI), D38, and R85. Residues 156–158 (SCT), T187, 216–217 (TG), and R239 each bind D-glyceraldehyde 3-phosphate. The Nucleophile role is filled by C157. N321 serves as a coordination point for NAD(+).

The protein belongs to the glyceraldehyde-3-phosphate dehydrogenase family. In terms of assembly, homotetramer.

Its subcellular location is the cytoplasm. The catalysed reaction is D-glyceraldehyde 3-phosphate + phosphate + NAD(+) = (2R)-3-phospho-glyceroyl phosphate + NADH + H(+). It functions in the pathway carbohydrate degradation; glycolysis; pyruvate from D-glyceraldehyde 3-phosphate: step 1/5. Key enzyme in glycolysis that catalyzes the first step of the pathway by converting D-glyceraldehyde 3-phosphate (G3P) into 3-phospho-D-glyceroyl phosphate. Essential for the maintenance of cellular ATP levels and carbohydrate metabolism. In Pinus sylvestris (Scotch pine), this protein is Glyceraldehyde-3-phosphate dehydrogenase, cytosolic (GAPC).